A 519-amino-acid polypeptide reads, in one-letter code: Halolysin (519 aa).

The segment at residues 1-27 (MAGTPNFDRRSFLRLAAAAGLTGMAGV) is a signal peptide (tat-type signal). Positions 28–116 (TSATPGRSPG…AEKNATHEAL (89 aa)) are excised as a propeptide. The Peptidase S8 domain occupies 127–400 (QYAPQQVNAD…SGRVDAANAV (274 aa)). Catalysis depends on charge relay system residues D154, H193, and S347. A disordered region spans residues 386-425 (STKQGSGRVDAANAVTTDPGDGGGGGGGGSKETTYDGTLS). The segment covering 405 to 415 (GDGGGGGGGGS) has biased composition (gly residues).

It belongs to the peptidase S8 family. Predicted to be exported by the Tat system. The position of the signal peptide cleavage has not been experimentally proven.

The protein resides in the secreted. Functionally, probable secreted halophilic serine protease showing proteolytic activity toward the protease general substrate azocasein. The polypeptide is Halolysin (hly) (Haloferax mediterranei (strain ATCC 33500 / DSM 1411 / JCM 8866 / NBRC 14739 / NCIMB 2177 / R-4) (Halobacterium mediterranei)).